Reading from the N-terminus, the 595-residue chain is Peptidyl-prolyl cis-trans isomerase CYP65 (595 aa).

One can recognise a U-box domain in the interval 35-108 (KSLPYYCCAL…GEYHCPVLNK (74 aa)). A PPIase cyclophilin-type domain is found at 342–496 (KKGYVQFQTT…EEIKIIEASV (155 aa)). 2 disordered regions span residues 503-546 (ELDE…GGGG) and 576-595 (SKKR…FSSW). Over residues 510 to 525 (KEKAEKEKNEDKDIEK) the composition is skewed to basic and acidic residues. Residues 582 to 595 (TASASTGFKDFSSW) are compositionally biased toward polar residues.

Belongs to the cyclophilin-type PPIase family. PPIL2 subfamily. In terms of tissue distribution, expressed in leaves, flower buds and stems. Lower levels of expression in roots.

It localises to the nucleus. It carries out the reaction [protein]-peptidylproline (omega=180) = [protein]-peptidylproline (omega=0). The enzyme catalyses S-ubiquitinyl-[E2 ubiquitin-conjugating enzyme]-L-cysteine + [acceptor protein]-L-lysine = [E2 ubiquitin-conjugating enzyme]-L-cysteine + N(6)-ubiquitinyl-[acceptor protein]-L-lysine.. Its pathway is protein modification; protein ubiquitination. In terms of biological role, may catalyze the cis-trans isomerization of proline imidic peptide bonds in oligopeptides thereby assisting the folding of proteins. May also function as a chaperone, playing a role in intracellular transport of proteins. May also have a protein ubiquitin ligase activity acting as an E3 ubiquitin protein ligase or as a ubiquitin-ubiquitin ligase promoting elongation of ubiquitin chains on proteins. This is Peptidyl-prolyl cis-trans isomerase CYP65 (CYP65) from Arabidopsis thaliana (Mouse-ear cress).